A 681-amino-acid chain; its full sequence is Probable L-type lectin-domain containing receptor kinase S.7 (681 aa).

Residues 1–21 form the signal peptide; it reads MSLSRKLLVIFFTWITALSMS. Topologically, residues 22-305 are extracellular; sequence KPIFVSSDNM…PSKKRRHRHN (284 aa). The legume-lectin like stretch occupies residues 30–265; it reads NMNFTFKSFT…IHLIENWSFK (236 aa). N32, N42, N86, N121, N135, N261, and N281 each carry an N-linked (GlcNAc...) asparagine glycan. Residues 306–326 traverse the membrane as a helical segment; sequence LAIGLGISCPVLICLALFVFG. The Cytoplasmic segment spans residues 327-681; sequence YFTLKKWKSV…EGDSIVYVVS (355 aa). The 279-residue stretch at 365–643 folds into the Protein kinase domain; that stretch reads FHSSRVIGRG…RVLQILNNEI (279 aa). Residues 371 to 379 and K394 contribute to the ATP site; that span reads IGRGAFGNV. Catalysis depends on D493, which acts as the Proton acceptor.

It in the C-terminal section; belongs to the protein kinase superfamily. Ser/Thr protein kinase family. The protein in the N-terminal section; belongs to the leguminous lectin family.

The protein resides in the cell membrane. The catalysed reaction is L-seryl-[protein] + ATP = O-phospho-L-seryl-[protein] + ADP + H(+). It catalyses the reaction L-threonyl-[protein] + ATP = O-phospho-L-threonyl-[protein] + ADP + H(+). In terms of biological role, involved in resistance response to the pathogenic oomycetes Phytophthora infestans and Phytophthora capsici. In Arabidopsis thaliana (Mouse-ear cress), this protein is Probable L-type lectin-domain containing receptor kinase S.7.